A 276-amino-acid polypeptide reads, in one-letter code: NAD-capped RNA hydrolase NudC (276 aa).

Arg-82 contacts substrate. Zn(2+) is bound by residues Cys-112 and Cys-115. Glu-125 is a binding site for substrate. Residues Cys-130 and Cys-133 each contribute to the Zn(2+) site. Tyr-138 contacts substrate. The region spanning 139–262 is the Nudix hydrolase domain; it reads PRLSPSMIVL…SIARYLIELY (124 aa). 3 residues coordinate a divalent metal cation: Ala-172, Glu-188, and Glu-192. The Nudix box signature appears at 173–194; it reads GYVEPGESVEQCVAREVREEVG. 206–213 serves as a coordination point for substrate; that stretch reads QGWPFPHS. Position 233 (Glu-233) interacts with a divalent metal cation. Ala-255 is a binding site for substrate.

Belongs to the Nudix hydrolase family. NudC subfamily. As to quaternary structure, homodimer. Mg(2+) is required as a cofactor. Mn(2+) serves as cofactor. The cofactor is Zn(2+).

The enzyme catalyses a 5'-end NAD(+)-phospho-ribonucleoside in mRNA + H2O = a 5'-end phospho-adenosine-phospho-ribonucleoside in mRNA + beta-nicotinamide D-ribonucleotide + 2 H(+). It catalyses the reaction NAD(+) + H2O = beta-nicotinamide D-ribonucleotide + AMP + 2 H(+). It carries out the reaction NADH + H2O = reduced beta-nicotinamide D-ribonucleotide + AMP + 2 H(+). Functionally, mRNA decapping enzyme that specifically removes the nicotinamide adenine dinucleotide (NAD) cap from a subset of mRNAs by hydrolyzing the diphosphate linkage to produce nicotinamide mononucleotide (NMN) and 5' monophosphate mRNA. The NAD-cap is present at the 5'-end of some mRNAs and stabilizes RNA against 5'-processing. Has preference for mRNAs with a 5'-end purine. Catalyzes the hydrolysis of a broad range of dinucleotide pyrophosphates. The chain is NAD-capped RNA hydrolase NudC from Stutzerimonas stutzeri (strain A1501) (Pseudomonas stutzeri).